Consider the following 236-residue polypeptide: NADH-quinone oxidoreductase subunit C (236 aa).

The segment at 1-20 (MSPPNQDAQEGRPDSPTAEV) is disordered.

The protein belongs to the complex I 30 kDa subunit family. NDH-1 is composed of 14 different subunits. Subunits NuoB, C, D, E, F, and G constitute the peripheral sector of the complex.

It localises to the cell membrane. It carries out the reaction a quinone + NADH + 5 H(+)(in) = a quinol + NAD(+) + 4 H(+)(out). NDH-1 shuttles electrons from NADH, via FMN and iron-sulfur (Fe-S) centers, to quinones in the respiratory chain. The immediate electron acceptor for the enzyme in this species is believed to be a menaquinone. Couples the redox reaction to proton translocation (for every two electrons transferred, four hydrogen ions are translocated across the cytoplasmic membrane), and thus conserves the redox energy in a proton gradient. This is NADH-quinone oxidoreductase subunit C from Mycobacterium tuberculosis (strain ATCC 25177 / H37Ra).